Here is a 343-residue protein sequence, read N- to C-terminus: Heat-inducible transcription repressor HrcA (343 aa).

This sequence belongs to the HrcA family.

Functionally, negative regulator of class I heat shock genes (grpE-dnaK-dnaJ and groELS operons). Prevents heat-shock induction of these operons. This chain is Heat-inducible transcription repressor HrcA, found in Caldanaerobacter subterraneus subsp. tengcongensis (strain DSM 15242 / JCM 11007 / NBRC 100824 / MB4) (Thermoanaerobacter tengcongensis).